The following is a 252-amino-acid chain: MILHAQTKHGKPGLPWLVFLHGFSGDCHEWQEVGEVFADYSRLYVDLPGHGGSAAISVDGFDDVTDLLRKTLVSYNILDFWLVGYSLGGRVAMMAACQGLAGLCGVIVEGGHPGLQNAEQRAERQRSDRQWAQRFRTEPLTAVFADWYQQPVFASLNDDQRRELVALRSNNNGATLAAMLEATSLAVQPDLRANLSARTFAFYYLCGERDSKFRALAAELAADCHVIPRAGHNAHRENPAGVIASLAQILRF.

The protein belongs to the AB hydrolase superfamily. MenH family. Monomer.

The enzyme catalyses 5-enolpyruvoyl-6-hydroxy-2-succinyl-cyclohex-3-ene-1-carboxylate = (1R,6R)-6-hydroxy-2-succinyl-cyclohexa-2,4-diene-1-carboxylate + pyruvate. It functions in the pathway quinol/quinone metabolism; 1,4-dihydroxy-2-naphthoate biosynthesis; 1,4-dihydroxy-2-naphthoate from chorismate: step 3/7. Its pathway is quinol/quinone metabolism; menaquinone biosynthesis. Functionally, catalyzes a proton abstraction reaction that results in 2,5-elimination of pyruvate from 2-succinyl-5-enolpyruvyl-6-hydroxy-3-cyclohexene-1-carboxylate (SEPHCHC) and the formation of 2-succinyl-6-hydroxy-2,4-cyclohexadiene-1-carboxylate (SHCHC). This Shigella dysenteriae serotype 1 (strain Sd197) protein is 2-succinyl-6-hydroxy-2,4-cyclohexadiene-1-carboxylate synthase.